A 321-amino-acid chain; its full sequence is Peptidase 1 (321 aa).

The N-terminal stretch at 1-18 is a signal peptide; the sequence is MKIILAIASLLVLSAVYA. A propeptide spanning residues 19 to 98 is cleaved from the precursor; that stretch reads RPASIKTFEE…LKTQFDLNAE (80 aa). N-linked (GlcNAc...) asparagine glycosylation occurs at Asn-34. Cys-130 and Cys-170 are disulfide-bonded. Cys-133 is an active-site residue. Residue Asn-151 is glycosylated (N-linked (GlcNAc...) asparagine). Catalysis depends on residues His-269 and Asn-289.

The protein belongs to the peptidase C1 family.

It localises to the secreted. The enzyme catalyses Broad endopeptidase specificity.. In terms of biological role, probable thiol protease. This chain is Peptidase 1 (EURM1), found in Euroglyphus maynei (Mayne's house dust mite).